A 307-amino-acid chain; its full sequence is UDP-3-O-acyl-N-acetylglucosamine deacetylase (307 aa).

Zn(2+)-binding residues include H78, H241, and D245. The active-site Proton donor is the H268.

The protein belongs to the LpxC family. The cofactor is Zn(2+).

It catalyses the reaction a UDP-3-O-[(3R)-3-hydroxyacyl]-N-acetyl-alpha-D-glucosamine + H2O = a UDP-3-O-[(3R)-3-hydroxyacyl]-alpha-D-glucosamine + acetate. It participates in glycolipid biosynthesis; lipid IV(A) biosynthesis; lipid IV(A) from (3R)-3-hydroxytetradecanoyl-[acyl-carrier-protein] and UDP-N-acetyl-alpha-D-glucosamine: step 2/6. In terms of biological role, catalyzes the hydrolysis of UDP-3-O-myristoyl-N-acetylglucosamine to form UDP-3-O-myristoylglucosamine and acetate, the committed step in lipid A biosynthesis. The polypeptide is UDP-3-O-acyl-N-acetylglucosamine deacetylase (Delftia acidovorans (strain DSM 14801 / SPH-1)).